We begin with the raw amino-acid sequence, 121 residues long: Perlustrin-like protein (121 aa).

Positions 1 to 23 are cleaved as a signal peptide; that stretch reads MKFGVGFLLSCLVALNTVQNMLA. The IGFBP N-terminal domain occupies 24 to 104; sequence LSCLPCDFDT…FDFKGTCQES (81 aa). 6 disulfide bridges follow: Cys-26–Cys-52, Cys-29–Cys-54, Cys-36–Cys-55, Cys-45–Cys-58, Cys-66–Cys-79, and Cys-73–Cys-101. Residues Asn-68, Asn-81, and Asn-117 are each glycosylated (N-linked (GlcNAc...) asparagine).

In terms of tissue distribution, component of the acid-insoluble organic matrix of calcified layers of the shell (at protein level).

Its subcellular location is the secreted. The sequence is that of Perlustrin-like protein from Lottia gigantea (Giant owl limpet).